The chain runs to 553 residues: Arginine--tRNA ligase (553 aa).

Positions 132–140 match the 'HIGH' region motif; the sequence is PTGDLHIGH.

Belongs to the class-I aminoacyl-tRNA synthetase family. In terms of assembly, monomer.

The protein localises to the cytoplasm. It catalyses the reaction tRNA(Arg) + L-arginine + ATP = L-arginyl-tRNA(Arg) + AMP + diphosphate. In Staphylococcus aureus (strain N315), this protein is Arginine--tRNA ligase.